Reading from the N-terminus, the 316-residue chain is Protoheme IX farnesyltransferase (316 aa).

The next 9 helical transmembrane spans lie at 32–52, 53–73, 98–118, 120–140, 153–173, 180–200, 226–246, 251–271, and 280–300; these read VMSL…THVN, PIIG…SGAL, VARE…VITL, FVAN…YVVI, IVIG…AVAG, LALF…LALV, ILLY…IGFA, GLLS…VYLA, and VAMR…AAIV.

This sequence belongs to the UbiA prenyltransferase family. Protoheme IX farnesyltransferase subfamily.

It is found in the cell inner membrane. It catalyses the reaction heme b + (2E,6E)-farnesyl diphosphate + H2O = Fe(II)-heme o + diphosphate. Its pathway is porphyrin-containing compound metabolism; heme O biosynthesis; heme O from protoheme: step 1/1. Functionally, converts heme B (protoheme IX) to heme O by substitution of the vinyl group on carbon 2 of heme B porphyrin ring with a hydroxyethyl farnesyl side group. The sequence is that of Protoheme IX farnesyltransferase from Methylocella silvestris (strain DSM 15510 / CIP 108128 / LMG 27833 / NCIMB 13906 / BL2).